The sequence spans 283 residues: MEPPGDWGPPPWRSTPKTDVLRLVLYLTFLGAPCYAPALPSCKEDEYPVGSECCPKCSPGYRVKEACGELTGTVCEPCPPGTYIAHLNGLSKCLQCQMCDPAMGLRASRNCSRTENAVCGCSPGHFCIVQDGDHCAACRAYATSSPGQRVQKGGTESQDTLCQNCPPGTFSPNGTLEECQHQTKCSWLVTKAGAGTSSSHWVWWFLSGSLVIVIVCSTVGLIICVKRRKPRGDVVKVIVSVQRKRQEAEGEATVIEALQAPPDVTTVAVEETIPSFTGRSPNH.

Positions 1–38 are cleaved as a signal peptide; sequence MEPPGDWGPPPWRSTPKTDVLRLVLYLTFLGAPCYAPA. Residues 39-202 lie on the Extracellular side of the membrane; the sequence is LPSCKEDEYP…GAGTSSSHWV (164 aa). 8 cysteine pairs are disulfide-bonded: cysteine 42–cysteine 53, cysteine 54–cysteine 67, cysteine 57–cysteine 75, cysteine 78–cysteine 93, cysteine 96–cysteine 111, cysteine 99–cysteine 119, cysteine 121–cysteine 138, and cysteine 127–cysteine 135. TNFR-Cys repeat units lie at residues 42–75, 78–119, and 121–162; these read CKED…GTVC, CPPG…NAVC, and CSPG…DTLC. Asparagine 110 carries an N-linked (GlcNAc...) asparagine glycan. Asparagine 173 carries an N-linked (GlcNAc...) asparagine glycan. The helical transmembrane segment at 203–223 threads the bilayer; sequence WWFLSGSLVIVIVCSTVGLII. Residues 224 to 283 lie on the Cytoplasmic side of the membrane; sequence CVKRRKPRGDVVKVIVSVQRKRQEAEGEATVIEALQAPPDVTTVAVEETIPSFTGRSPNH. Residue serine 240 is modified to Phosphoserine.

It belongs to the tumor necrosis factor receptor superfamily. In terms of assembly, interacts with TRAF2, TRAF3 and TRAF5. Interacts (via CRD1/TNFR-Cys 1) with CD160; this interaction is direct. Interacts with LTA and TNFSF14. Interacts (via CRD1/TNFR-Cys 1) in cis and trans with BTLA; the cis interactions inhibits the trans interactions. (Microbial infection) Interacts with herpes simplex virus 1/HHV-1 envelope glycoprotein D. As to quaternary structure, (Microbial infection) Interacts with herpes simplex virus 2/HHV-2 envelope glycoprotein D. In terms of processing, N-glycosylated. As to expression, widely expressed, with the highest expression in lung, spleen and thymus. Expressed in a subpopulation of B cells and monocytes. Expressed in naive T cells.

It is found in the cell membrane. Functionally, receptor for four distinct ligands: The TNF superfamily members TNFSF14/LIGHT and homotrimeric LTA/lymphotoxin-alpha and the immunoglobulin superfamily members BTLA and CD160, altogether defining a complex stimulatory and inhibitory signaling network. Signals via the TRAF2-TRAF3 E3 ligase pathway to promote immune cell survival and differentiation. Participates in bidirectional cell-cell contact signaling between antigen presenting cells and lymphocytes. In response to ligation of TNFSF14/LIGHT, delivers costimulatory signals to T cells, promoting cell proliferation and effector functions. Interacts with CD160 on NK cells, enhancing IFNG production and anti-tumor immune response. In the context of bacterial infection, acts as a signaling receptor on epithelial cells for CD160 from intraepithelial lymphocytes, triggering the production of antimicrobial proteins and pro-inflammatory cytokines. Upon binding to CD160 on activated CD4+ T cells, down-regulates CD28 costimulatory signaling, restricting memory and alloantigen-specific immune response. May interact in cis (on the same cell) or in trans (on other cells) with BTLA. In cis interactions, appears to play an immune regulatory role inhibiting in trans interactions in naive T cells to maintain a resting state. In trans interactions, can predominate during adaptive immune response to provide survival signals to effector T cells. Its function is as follows. (Microbial infection) Acts as a receptor for Herpes simplex virus 1/HHV-1. (Microbial infection) Acts as a receptor for Herpes simplex virus 2/HHV-2. In Homo sapiens (Human), this protein is Tumor necrosis factor receptor superfamily member 14.